Consider the following 419-residue polypeptide: MLGIITFIIIFGILVIVHEFGHFYFAKKSGILVREFAIGMGPKIFSHVDQGGTLYTLRMLPLGGYVRMAGWGDDKTEIKTGTPASLTLNEQGFVKRINLSQSKLDPTSLPMHVTGYDLEDQLSITGLVLEETKTYKVAHDATIVEEDGTEIRIAPLDVQYQNASIGGRLITNFAGPMNNFILGIVVFILLVFLQGGMPDFSSNHVRVQENGAAAKAGLRDNDQIVAINGYKVTSWNDLTEAVDLATRDLGPSQTIKVTYKSHQRLKTVAVKPQKHAKTYTIGVKASLKTGFKDKLLGGLELAWSRAFTILNALKGLITGFSLNKLGGPVAMYDMSNQAAQNGLESVLSLMAMLSINLGIFNLIPIPALDGGKILMNIIEAIRRKPIKQETEAYITLAGVAIMVVLMIAVTWNDIMRVFF.

Residue His-18 participates in Zn(2+) binding. Glu-19 is an active-site residue. His-22 serves as a coordination point for Zn(2+). A run of 4 helical transmembrane segments spans residues 169–191 (LITNFAGPMNNFILGIVVFILLV), 301–323 (LAWSRAFTILNALKGLITGFSLN), 343–365 (LESVLSLMAMLSINLGIFNLIPI), and 392–411 (AYITLAGVAIMVVLMIAVTW). A PDZ domain is found at 175-274 (GPMNNFILGI…LKTVAVKPQK (100 aa)).

It belongs to the peptidase M50B family. Zn(2+) serves as cofactor.

The protein resides in the cell membrane. The chain is Putative zinc metalloprotease SPy_1963/M5005_Spy1674 from Streptococcus pyogenes serotype M1.